A 63-amino-acid polypeptide reads, in one-letter code: Large ribosomal subunit protein bL28 (63 aa).

A disordered region spans residues 1–20; it reads MSRRCAITGKGPMVGNNVSH.

The protein belongs to the bacterial ribosomal protein bL28 family.

This is Large ribosomal subunit protein bL28 from Campylobacter curvus (strain 525.92).